The following is a 365-amino-acid chain: 2-aminoethylphosphonate--pyruvate transaminase (365 aa).

At Lys194 the chain carries N6-(pyridoxal phosphate)lysine.

This sequence belongs to the class-V pyridoxal-phosphate-dependent aminotransferase family. PhnW subfamily. As to quaternary structure, homodimer. Requires pyridoxal 5'-phosphate as cofactor.

It catalyses the reaction (2-aminoethyl)phosphonate + pyruvate = phosphonoacetaldehyde + L-alanine. Its function is as follows. Involved in phosphonate degradation. The protein is 2-aminoethylphosphonate--pyruvate transaminase of Bacillus cereus (strain G9842).